We begin with the raw amino-acid sequence, 106 residues long: ATP-dependent Clp protease adapter protein ClpS (106 aa).

Belongs to the ClpS family. Binds to the N-terminal domain of the chaperone ClpA.

Functionally, involved in the modulation of the specificity of the ClpAP-mediated ATP-dependent protein degradation. This Photobacterium profundum (strain SS9) protein is ATP-dependent Clp protease adapter protein ClpS.